The following is a 285-amino-acid chain: RNA 5'-monophosphate methyltransferase (285 aa).

The interval methionine 1–alanine 28 is disordered. S-adenosyl-L-methionine-binding positions include arginine 46, asparagine 77, aspartate 111, aspartate 136–isoleucine 137, and methionine 165. In terms of domain architecture, Bin3-type SAM spans glutamate 53–proline 275.

The protein belongs to the methyltransferase superfamily. Interacts with DICER1; the interaction may be mediated by RNA.

The protein resides in the cytoplasm. It catalyses the reaction a 5'-end 5'-phospho-ribonucleoside-RNA + S-adenosyl-L-methionine = a 5'-end (5'-methylphospho)-ribonucleoside-RNA + S-adenosyl-L-homocysteine. The enzyme catalyses a 5'-end 5'-phospho-ribonucleoside-RNA + 2 S-adenosyl-L-methionine = a 5'-end (5'-bismethylphospho)-ribonucleoside-RNA + 2 S-adenosyl-L-homocysteine. In terms of biological role, O-methyltransferase that specifically monomethylates 5'-monophosphate of cytoplasmic histidyl tRNA (tRNA(His)), acting as a capping enzyme by protecting tRNA(His) from cleavage by DICER1. Also able, with less efficiently, to methylate the 5' monophosphate of a subset of pre-miRNAs, acting as a negative regulator of miRNA processing. The 5' monophosphate of pre-miRNAs is recognized by DICER1 and is required for pre-miRNAs processing: methylation at this position reduces the processing of pre-miRNAs by DICER1. Was also reported to mediate dimethylation of pre-miR-145; however dimethylation cannot be reproduced by another group which observes a monomethylation of pre-miR-145. The polypeptide is RNA 5'-monophosphate methyltransferase (Rattus norvegicus (Rat)).